The sequence spans 161 residues: Regulatory protein RecX (161 aa).

This sequence belongs to the RecX family.

The protein localises to the cytoplasm. Its function is as follows. Modulates RecA activity. The polypeptide is Regulatory protein RecX (Halorhodospira halophila (strain DSM 244 / SL1) (Ectothiorhodospira halophila (strain DSM 244 / SL1))).